A 233-amino-acid polypeptide reads, in one-letter code: MSIISMKQLLEAGVHFGHQTRRWNPKMAPYIFTERNGIYIIDLQKTVKKVEEAYEFVKSVVADGKEVLFVGTKKQAQEAIEEESLRSGMHFVNNRWLGGMLTNFKTIKTRINKLEQLEKMEEDGTFEVLPKKEVIKLRNEKEKLEKNLGGIKNLDASNLGAIFIVDPRKEKNAIDEAKNLGIPVVAIVDTNCDPDEIDYVIPGNDDAIRAVRLITSKIADAIIEGNQGEQLAE.

The protein belongs to the universal ribosomal protein uS2 family.

The sequence is that of Small ribosomal subunit protein uS2 from Clostridium novyi (strain NT).